Consider the following 253-residue polypeptide: Purine nucleoside phosphorylase DR_1966 (253 aa).

The Zn(2+) site is built by His72, Cys106, and His123.

The protein belongs to the purine nucleoside phosphorylase YfiH/LACC1 family. Homodimer. The cofactor is Cu(2+). Requires Zn(2+) as cofactor.

It catalyses the reaction adenosine + phosphate = alpha-D-ribose 1-phosphate + adenine. The enzyme catalyses S-methyl-5'-thioadenosine + phosphate = 5-(methylsulfanyl)-alpha-D-ribose 1-phosphate + adenine. It carries out the reaction inosine + phosphate = alpha-D-ribose 1-phosphate + hypoxanthine. The catalysed reaction is adenosine + H2O + H(+) = inosine + NH4(+). Functionally, purine nucleoside enzyme that catalyzes the phosphorolysis of adenosine and inosine nucleosides, yielding D-ribose 1-phosphate and the respective free bases, adenine and hypoxanthine. Also catalyzes the phosphorolysis of S-methyl-5'-thioadenosine into adenine and S-methyl-5-thio-alpha-D-ribose 1-phosphate. Also has adenosine deaminase activity. The protein is Purine nucleoside phosphorylase DR_1966 of Deinococcus radiodurans (strain ATCC 13939 / DSM 20539 / JCM 16871 / CCUG 27074 / LMG 4051 / NBRC 15346 / NCIMB 9279 / VKM B-1422 / R1).